Consider the following 347-residue polypeptide: APALGFVPIAVHFDLFGCLQEIGKPATAQDVCISITFLHKKSMFAKVNRSSDDTLFLMGGLGFLDLLPDDVYQANAVTRFLVDTPSAQHGAMHFTSEGLLASAFLMRRLMDTKFEYPFQECDTPFQYAHKLMGNEHLAREHVYSVMHETGRLDSFNTFMTGKFGRWGTMPDRVRKLGYDLDGLLQSTAPERIRVVDIGGGRGELLLEMQATYPHLLKKENLILQEYNADIGVVPEVTEMGWNYKEDASEQPVKGALLYSMAHVLHNLSDIESIKLLTKVARVMAPSSRLLIQEFTKNAASSTTHAAMILMHAGRERTSAEWRDLAAFAGLEITFEAYPPNGECVVEM.

Trp166 contributes to the S-adenosyl-L-methionine binding site. The active-site Proton acceptor is the His265.

Belongs to the class I-like SAM-binding methyltransferase superfamily. Cation-independent O-methyltransferase family.

It functions in the pathway secondary metabolite biosynthesis. Functionally, O-methyltransferase; part of the gene cluster that mediates the biosynthesis of aurasperone B, a dimeric gamma-naphthopyrone. The first step in the biosynthesis of aurasperone B is the production of gamma-naphthopyrone precursor YWA1 by the non-reducing polyketide synthase albA, via condensation of one acetyl-CoA starter unit with 6 malonyl-CoA units. YWA1 is then methylated by aunE at position C-6 to yield foncesin which is further methylated at position C-8 by aunD to produce fonsecin B. A key enzyme in the biosynthetic pathway is the cytochrome P450 monooxygenase aunB which catalyzes the oxidative dimerization of fonsecin B to aurasperone B. AunB also catalyzes the oxidative dimerization of rubrofusarin B into aurasperone A. The polypeptide is O-methyltransferase aunE (Aspergillus niger (strain ATCC 1015 / CBS 113.46 / FGSC A1144 / LSHB Ac4 / NCTC 3858a / NRRL 328 / USDA 3528.7)).